We begin with the raw amino-acid sequence, 449 residues long: Maturation protein A (449 aa).

The protein belongs to the Leviviricetes maturation protein family. In terms of assembly, interacts with the host pilus.

The protein resides in the virion. Its function is as follows. The maturation protein is required for the typical attachment of the phage to the side of the bacterial F-pili. Binds to sequences located toward each end of the genome, hence circularizing it. The RNA genome-maturation protein A complex is released from the capsid upon host receptor binding. Maturation protein A enters the cell along with the viral RNA. In Pseudomonas aeruginosa (Bacteriophage PP7), this protein is Maturation protein A.